Here is a 565-residue protein sequence, read N- to C-terminus: Thiol:disulfide interchange protein DsbD (565 aa).

Residues 1–19 (MAQRIFTLILLLCSTSVFA) form the signal peptide. Disulfide bonds link Cys-122/Cys-128 and Cys-182/Cys-304. Transmembrane regions (helical) follow at residues 163–183 (LPFS…TPCV), 208–228 (LLTF…GLVV), 243–263 (YVLI…FGLF), 289–309 (GVFI…TAPL), 323–343 (WLGG…LMLI), 357–377 (WMEQ…VFLL), and 384–404 (IWGL…AFIT). Residues 434–565 (WAFGETHTAQ…FSAHLRDRQP (132 aa)) form the Thioredoxin domain. A disulfide bond links Cys-480 and Cys-483.

The protein belongs to the thioredoxin family. DsbD subfamily.

Its subcellular location is the cell inner membrane. It carries out the reaction [protein]-dithiol + NAD(+) = [protein]-disulfide + NADH + H(+). It catalyses the reaction [protein]-dithiol + NADP(+) = [protein]-disulfide + NADPH + H(+). Required to facilitate the formation of correct disulfide bonds in some periplasmic proteins and for the assembly of the periplasmic c-type cytochromes. Acts by transferring electrons from cytoplasmic thioredoxin to the periplasm. This transfer involves a cascade of disulfide bond formation and reduction steps. The polypeptide is Thiol:disulfide interchange protein DsbD (Escherichia coli O6:K15:H31 (strain 536 / UPEC)).